A 69-amino-acid chain; its full sequence is Guanine nucleotide-binding protein G(I)/G(S)/G(O) subunit gamma-T2 (69 aa).

Cys-66 is modified (cysteine methyl ester). Cys-66 carries S-farnesyl cysteine lipidation. Residues 67–69 constitute a propeptide, removed in mature form; sequence LIS.

The protein belongs to the G protein gamma family. As to quaternary structure, g proteins are composed of 3 units, alpha, beta and gamma. As to expression, retinal cones.

The protein localises to the cell membrane. Functionally, guanine nucleotide-binding proteins (G proteins) are involved as a modulator or transducer in various transmembrane signaling systems. The beta and gamma chains are required for the GTPase activity, for replacement of GDP by GTP, and for G protein-effector interaction. The sequence is that of Guanine nucleotide-binding protein G(I)/G(S)/G(O) subunit gamma-T2 (GNGT2) from Homo sapiens (Human).